A 595-amino-acid polypeptide reads, in one-letter code: Aspartate--tRNA(Asp/Asn) ligase (595 aa).

Glu-174 lines the L-aspartate pocket. Residues 198–201 (QLFK) form an aspartate region. Arg-220 is an L-aspartate binding site. ATP contacts are provided by residues 220–222 (RDE) and Gln-229. Position 456 (His-456) interacts with L-aspartate. Position 486 (Glu-486) interacts with ATP. An L-aspartate-binding site is contributed by Arg-493. Position 538–541 (538–541 (GFDR)) interacts with ATP.

It belongs to the class-II aminoacyl-tRNA synthetase family. Type 1 subfamily. As to quaternary structure, homodimer.

It localises to the cytoplasm. It carries out the reaction tRNA(Asx) + L-aspartate + ATP = L-aspartyl-tRNA(Asx) + AMP + diphosphate. Functionally, aspartyl-tRNA synthetase with relaxed tRNA specificity since it is able to aspartylate not only its cognate tRNA(Asp) but also tRNA(Asn). Reaction proceeds in two steps: L-aspartate is first activated by ATP to form Asp-AMP and then transferred to the acceptor end of tRNA(Asp/Asn). This is Aspartate--tRNA(Asp/Asn) ligase from Gloeobacter violaceus (strain ATCC 29082 / PCC 7421).